The following is a 528-amino-acid chain: Ankyrin repeat and death domain-containing protein 1B (528 aa).

ANK repeat units lie at residues 67-96 (PNER…NINV), 100-129 (MNRT…RVDV), 133-162 (HGLT…DQRA), 166-197 (DGMS…DLNQ), 201-230 (KGRK…HTSE), 234-263 (GGNT…DINE), 267-296 (LNIS…DLHQ), 300-329 (PKES…DIDI), 333-362 (KQQT…DLKA), and 366-395 (QGKT…YYAW). The 89-residue stretch at 427–515 (TLLWDLAYHQ…KLAEKTRHFK (89 aa)) folds into the Death domain.

This Homo sapiens (Human) protein is Ankyrin repeat and death domain-containing protein 1B (ANKDD1B).